The chain runs to 178 residues: Large ribosomal subunit protein uL6 (178 aa).

It belongs to the universal ribosomal protein uL6 family. In terms of assembly, part of the 50S ribosomal subunit.

Its function is as follows. This protein binds to the 23S rRNA, and is important in its secondary structure. It is located near the subunit interface in the base of the L7/L12 stalk, and near the tRNA binding site of the peptidyltransferase center. In Thermoplasma acidophilum (strain ATCC 25905 / DSM 1728 / JCM 9062 / NBRC 15155 / AMRC-C165), this protein is Large ribosomal subunit protein uL6.